We begin with the raw amino-acid sequence, 325 residues long: Cytosolic Fe-S cluster assembly factor Nubp1 homolog (325 aa).

The tract at residues 1 to 26 (MSSGADVPSDAPAHCPGTQSDDAGKA) is disordered. 4 residues coordinate [4Fe-4S] cluster: C15, C29, C32, and C38. 68-75 (GKGGVGKS) provides a ligand contact to ATP. Residues C243 and C246 each coordinate [4Fe-4S] cluster.

Belongs to the Mrp/NBP35 ATP-binding proteins family. NUBP1/NBP35 subfamily. Heterotetramer of 2 Nubp1 and 2 Nubp2 chains. [4Fe-4S] cluster is required as a cofactor.

The protein resides in the cytoplasm. In terms of biological role, component of the cytosolic iron-sulfur (Fe/S) protein assembly (CIA) machinery. Required for maturation of extramitochondrial Fe-S proteins. The Nubp1-Nubp2 heterotetramer forms a Fe-S scaffold complex, mediating the de novo assembly of an Fe-S cluster and its transfer to target apoproteins. The chain is Cytosolic Fe-S cluster assembly factor Nubp1 homolog from Anopheles gambiae (African malaria mosquito).